The following is a 374-amino-acid chain: Alanine racemase (374 aa).

The Proton acceptor; specific for D-alanine role is filled by lysine 40. Lysine 40 carries the N6-(pyridoxal phosphate)lysine modification. Arginine 136 is a binding site for substrate. Tyrosine 264 (proton acceptor; specific for L-alanine) is an active-site residue. Methionine 311 is a binding site for substrate.

This sequence belongs to the alanine racemase family. Requires pyridoxal 5'-phosphate as cofactor.

It catalyses the reaction L-alanine = D-alanine. It participates in amino-acid biosynthesis; D-alanine biosynthesis; D-alanine from L-alanine: step 1/1. In terms of biological role, catalyzes the interconversion of L-alanine and D-alanine. May also act on other amino acids. The protein is Alanine racemase (alr) of Pediococcus pentosaceus (strain ATCC 25745 / CCUG 21536 / LMG 10740 / 183-1w).